A 273-amino-acid chain; its full sequence is Glutamate 5-kinase (273 aa).

ATP is bound at residue Lys-15. Substrate contacts are provided by Ser-55, Asp-142, and Asn-158. Residues 178–179 (SD) and 220–226 (TGGMLSK) contribute to the ATP site.

Belongs to the glutamate 5-kinase family.

The protein localises to the cytoplasm. It carries out the reaction L-glutamate + ATP = L-glutamyl 5-phosphate + ADP. The protein operates within amino-acid biosynthesis; L-proline biosynthesis; L-glutamate 5-semialdehyde from L-glutamate: step 1/2. In terms of biological role, catalyzes the transfer of a phosphate group to glutamate to form L-glutamate 5-phosphate. This chain is Glutamate 5-kinase, found in Streptococcus pyogenes serotype M6 (strain ATCC BAA-946 / MGAS10394).